Reading from the N-terminus, the 622-residue chain is Cilia- and flagella-associated protein 206 (622 aa).

The tract at residues 568–593 is disordered; it reads NTSQVYPLKEASTQSKREGSSRVPRP.

The protein belongs to the CFAP206 family. Expressed in the sperm, oviduct, lung, nasal cavity, brain ependyma and choroid plexus.

The protein localises to the cytoplasm. Its subcellular location is the cytoskeleton. It is found in the cilium axoneme. It localises to the cilium basal body. Its function is as follows. Essential for sperm motility and is involved in the regulation of the beating frequency of motile cilia on the epithelial cells of the respiratory tract. Required for the establishment of radial spokes in sperm flagella. In Mus musculus (Mouse), this protein is Cilia- and flagella-associated protein 206.